A 499-amino-acid chain; its full sequence is Serine/threonine-protein kinase RHS3 (499 aa).

The segment at 1-92 is disordered; the sequence is MLLKPGNKLV…NSSKPHTGGD (92 aa). Residues 39 to 55 are compositionally biased toward basic and acidic residues; that stretch reads QKQVEQNTKKIEEHQIK. Over residues 63–85 the composition is skewed to low complexity; it reads SNHNVNMSSQSNNSESTSTNNSS. Residues 113–436 enclose the Protein kinase domain; that stretch reads FRVLKRLGYG…ATEIKQHPFF (324 aa). Residues 119-127 and K144 each bind ATP; that span reads LGYGDIGSV. The Proton acceptor role is filled by D240. The AGC-kinase C-terminal domain occupies 437–499; sequence EGVNWALIRG…DPDYIVFEYF (63 aa).

Belongs to the protein kinase superfamily. AGC Ser/Thr protein kinase family. Interacts with PDPK1/PDK1. Post-translationally, autophosphorylated and phosphorylated by PDPK1/PDK1. In terms of tissue distribution, specifically expressed in root hair cells.

The catalysed reaction is L-seryl-[protein] + ATP = O-phospho-L-seryl-[protein] + ADP + H(+). It catalyses the reaction L-threonyl-[protein] + ATP = O-phospho-L-threonyl-[protein] + ADP + H(+). With respect to regulation, activated by PDPK1/PDK1. In terms of biological role, involved in root hair growth and morphogenesis. In Arabidopsis thaliana (Mouse-ear cress), this protein is Serine/threonine-protein kinase RHS3.